Consider the following 519-residue polypeptide: F-box-like/WD repeat-containing protein TBL1XR1-A (519 aa).

A LisH domain is found at 4 to 36; that stretch reads SSDEVNFLVYRYLQESGFSHSAFTFGIESHISQ. Residues 41 to 86 enclose the F-box-like domain; the sequence is GALAPPAALISIIQKGLQYVEAEVSINEDGTLFDGRPIESLSLIDA. The span at 115–139 shows a compositional bias: low complexity; the sequence is AAAAAATPNNQQPPAKNGENTANGE. The tract at residues 115-147 is disordered; that stretch reads AAAAAATPNNQQPPAKNGENTANGEENGGHALA. WD repeat units follow at residues 172-211, 228-267, 269-308, 311-349, 352-391, 394-442, 445-484, and 486-519; these read GHES…TSGS, PSNK…ASTL, QHKG…AKQQ, FHSA…PIKT, GHTN…CVHD, AHNK…CIHT, KHQE…LVHS, and RGTG…DLRK.

Belongs to the WD repeat EBI family. In terms of assembly, interacts with heterodimers of rxra and thrb, and this interaction is abrogated by thyroid hormone binding to thrb. Interacts with ncor1.

Its subcellular location is the nucleus. Functionally, F-box-like protein which acts as an integral component of the N-CoR transcriptional corepressor complex. Probably regulates transcription activation mediated by nuclear receptors. May mediate the recruitment of the 19S proteasome complex, leading to the subsequent proteasomal degradation of the N-CoR complex, thereby allowing cofactor exchange and transcription activation. The polypeptide is F-box-like/WD repeat-containing protein TBL1XR1-A (tbl1xr1-a) (Xenopus laevis (African clawed frog)).